Here is a 472-residue protein sequence, read N- to C-terminus: Adenosylhomocysteinase (472 aa).

Substrate contacts are provided by threonine 61, aspartate 139, and glutamate 198. An NAD(+)-binding site is contributed by 199 to 201 (TTT). Substrate contacts are provided by lysine 228 and aspartate 232. NAD(+)-binding positions include asparagine 233, 262–267 (GFGDVG), glutamate 285, asparagine 320, 341–343 (IGH), and asparagine 386.

Belongs to the adenosylhomocysteinase family. NAD(+) serves as cofactor.

It is found in the cytoplasm. It carries out the reaction S-adenosyl-L-homocysteine + H2O = L-homocysteine + adenosine. The protein operates within amino-acid biosynthesis; L-homocysteine biosynthesis; L-homocysteine from S-adenosyl-L-homocysteine: step 1/1. Its function is as follows. May play a key role in the regulation of the intracellular concentration of adenosylhomocysteine. In Sphingopyxis alaskensis (strain DSM 13593 / LMG 18877 / RB2256) (Sphingomonas alaskensis), this protein is Adenosylhomocysteinase.